The sequence spans 395 residues: Endophilin-B2 (395 aa).

Residue Met1 is modified to N-acetylmethionine. The segment at 1 to 27 (MDFNMKKLASDAGIFFTRAVQFTEEKF) is membrane-binding amphipathic helix. The residue at position 10 (Ser10) is a Phosphoserine. A BAR domain is found at 24–287 (EEKFGQAEKT…LGRFPGTFVG (264 aa)). 2 coiled-coil regions span residues 116–132 (IKVA…ERDF) and 206–240 (ASAL…LLLE). Residues 335–395 (SGTRKARVLY…VPVTYLELLS (61 aa)) enclose the SH3 domain. At Ser395 the chain carries Phosphoserine.

The protein belongs to the endophilin family. Homodimer, and heterodimer with SH3GLB1. As to expression, detected in skeletal muscle, adipocyte, brain, lung, colon and mammary gland.

The protein resides in the cytoplasm. This Homo sapiens (Human) protein is Endophilin-B2 (SH3GLB2).